The primary structure comprises 360 residues: Photosystem II protein D1 2 (360 aa).

The Cytoplasmic segment spans residues 1–31; the sequence is MTTTLQQRESASLWEQFCQWVTSTNNRIYVG. The helical transmembrane segment at 32–53 threads the bilayer; that stretch reads WFGTLMIPTLLTATTCFIIAFI. Over 54-110 the chain is Lumenal, thylakoid; that stretch reads AAPPVDIDGIREPVAGSLLYGNNIISGAVVPSSNAIGLHFYPIWEAASLDEWLYNGG. The helical transmembrane segment at 111-134 threads the bilayer; the sequence is PYQLVVFHFLIGIFCYMGRQWELS. Residue His-118 participates in chlorophyll a binding. Position 126 (Tyr-126) interacts with pheophytin a. At 135 to 142 the chain is on the cytoplasmic side; sequence YRLGMRPW. The chain crosses the membrane as a helical span at residues 143–161; the sequence is ICVAYSAPVSAATAVFLIY. Tyr-147 is a pheophytin a binding site. Residues 162–191 are Lumenal, thylakoid-facing; that stretch reads PIGQGSFSDGMPLGISGTFNFMIVFQAEHN. Asp-170 and Glu-189 together coordinate [CaMn4O5] cluster. The helical transmembrane segment at 192–218 threads the bilayer; sequence ILMHPFHMLGVAGVFGGSLFSAMHGSL. A chlorophyll a-binding site is contributed by His-198. A quinone-binding residues include His-215, Ser-264, and Phe-265. His-215 contributes to the Fe cation binding site. At 219-270 the chain is on the cytoplasmic side; it reads VTSSLVRETTEVESQNYGYKFGQEEETYNIVAAHGYFGRLIFQYASFNNSRS. Residues 271 to 295 form a helical membrane-spanning segment; it reads LHFFLGAWPVIGIWFTAMGVSTMAF. Fe cation is bound at residue His-272. Over 296 to 360 the chain is Lumenal, thylakoid; it reads NLNGFNFNQS…VALTAPAVNG (65 aa). His-332, Glu-333, His-337, Asp-342, and Ala-344 together coordinate [CaMn4O5] cluster. A propeptide spanning residues 345 to 360 is cleaved from the precursor; the sequence is SGEQAPVALTAPAVNG.

Belongs to the reaction center PufL/M/PsbA/D family. As to quaternary structure, PSII is composed of 1 copy each of membrane proteins PsbA, PsbB, PsbC, PsbD, PsbE, PsbF, PsbH, PsbI, PsbJ, PsbK, PsbL, PsbM, PsbT, PsbX, PsbY, PsbZ, Psb30/Ycf12, peripheral proteins PsbO, CyanoQ (PsbQ), PsbU, PsbV and a large number of cofactors. It forms dimeric complexes. It depends on The D1/D2 heterodimer binds P680, chlorophylls that are the primary electron donor of PSII, and subsequent electron acceptors. It shares a non-heme iron and each subunit binds pheophytin, quinone, additional chlorophylls, carotenoids and lipids. D1 provides most of the ligands for the Mn4-Ca-O5 cluster of the oxygen-evolving complex (OEC). There is also a Cl(-1) ion associated with D1 and D2, which is required for oxygen evolution. The PSII complex binds additional chlorophylls, carotenoids and specific lipids. as a cofactor. C-terminally processed by CtpA; processing is essential to allow assembly of the oxygen-evolving complex and photosynthetic growth. Post-translationally, tyr-161 forms a radical intermediate that is referred to as redox-active TyrZ, YZ or Y-Z.

It localises to the cellular thylakoid membrane. It catalyses the reaction 2 a plastoquinone + 4 hnu + 2 H2O = 2 a plastoquinol + O2. In terms of biological role, photosystem II (PSII) is a light-driven water:plastoquinone oxidoreductase that uses light energy to abstract electrons from H(2)O, generating O(2) and a proton gradient subsequently used for ATP formation. It consists of a core antenna complex that captures photons, and an electron transfer chain that converts photonic excitation into a charge separation. The D1/D2 (PsbA/PsbD) reaction center heterodimer binds P680, the primary electron donor of PSII as well as several subsequent electron acceptors. The polypeptide is Photosystem II protein D1 2 (Synechocystis sp. (strain ATCC 27184 / PCC 6803 / Kazusa)).